The chain runs to 316 residues: uncharacterized protein (316 aa).

Disordered stretches follow at residues 82 to 105 (AMAA…SGGN) and 238 to 257 (ASVS…DTQE). Low complexity-rich tracts occupy residues 84-96 (AAAS…SSGT) and 239-255 (SVSV…STDT).

Belongs to the MG307/MG309/MG338 family.

This is an uncharacterized protein from Mycoplasma pneumoniae (strain ATCC 29342 / M129 / Subtype 1) (Mycoplasmoides pneumoniae).